Reading from the N-terminus, the 341-residue chain is D-aspartate oxidase (341 aa).

Met1 carries the blocked amino end (Met) modification. Asp36, Lys37, Thr43, Ser44, Met50, Gly307, and Ile311 together coordinate FAD. The short motif at 339-341 (SKL) is the Microbody targeting signal element.

It belongs to the DAMOX/DASOX family. Monomer. Interacts with PEX5; the interaction is direct and required for localization of DDO to the peroxisome. Requires FAD as cofactor. In the kidney, expressed in epithelial cells of the proximal tubules and in the liver (at protein level).

It is found in the peroxisome matrix. The protein localises to the cytoplasm. Its subcellular location is the cytosol. It carries out the reaction D-aspartate + O2 + H2O = oxaloacetate + H2O2 + NH4(+). The catalysed reaction is D-glutamate + O2 + H2O = H2O2 + 2-oxoglutarate + NH4(+). Its activity is regulated as follows. Inhibited by phenylglyoxal; chemical modification of arginine residues in the enzyme with phenylglyoxal leads to the irreversible loss of activity towards dicarboxylic D-amino acids, paralleled by a transient appearance of activity versus monocarboxylic ones. Functionally, selectively catalyzes the oxidative deamination of acidic amino acids. Suppresses the level of D-aspartate in the brain, an amino acid that can act as an agonist for glutamate receptors. Protects the organism from the toxicity of D-amino acids. May also function in the intestine. The protein is D-aspartate oxidase (DDO) of Bos taurus (Bovine).